The primary structure comprises 501 residues: Acetylcholine receptor subunit beta (501 aa).

The N-terminal stretch at 1-23 (MTPGALLMLLGALGAPLAPGVRG) is a signal peptide. Over 24–244 (SEAEGRLREK…VIFYLIIRRK (221 aa)) the chain is Extracellular. Residues C151 and C165 are joined by a disulfide bond. Residue N164 is glycosylated (N-linked (GlcNAc...) asparagine). 3 consecutive transmembrane segments (helical) span residues 245–269 (PLFY…VFYL), 277–295 (MGLS…LLLA), and 311–332 (YLMF…VLNL). Residues 333–469 (HHRSPHTHQM…WQFVAMVVDR (137 aa)) lie on the Cytoplasmic side of the membrane. Y390 carries the phosphotyrosine; by Tyr-kinases modification. Residues 470–488 (LFLWTFIIFTSVGTLVIFL) traverse the membrane as a helical segment.

The protein belongs to the ligand-gated ion channel (TC 1.A.9) family. Acetylcholine receptor (TC 1.A.9.1) subfamily. Beta-1/CHRNB1 sub-subfamily. In terms of assembly, pentamer of two alpha chains, and one each of the beta, delta, and gamma (in immature muscle) or epsilon (in mature muscle) chains. The muscle heteropentamer composed of alpha-1, beta-1, delta, epsilon subunits interacts with the alpha-conotoxin ImII.

The protein localises to the postsynaptic cell membrane. Its subcellular location is the cell membrane. The enzyme catalyses K(+)(in) = K(+)(out). The catalysed reaction is Na(+)(in) = Na(+)(out). After binding acetylcholine, the AChR responds by an extensive change in conformation that affects all subunits and leads to opening of an ion-conducting channel across the plasma membrane. This chain is Acetylcholine receptor subunit beta, found in Homo sapiens (Human).